A 188-amino-acid polypeptide reads, in one-letter code: Pro-adrenomedullin (188 aa).

A signal peptide spans Met-1–Thr-21. Arg-41 carries the arginine amide modification. The propeptide occupies Glu-45–Val-92. The disordered stretch occupies residues Arg-69–Arg-89. A disulfide bridge connects residues Cys-110 and Cys-115. The segment at Asp-129–Pro-175 is disordered. A Tyrosine amide modification is found at Tyr-146. A propeptide spans Ser-153–Ile-188 (preproAM C-terminal fragment).

The protein belongs to the adrenomedullin family.

The protein localises to the secreted. Functionally, adrenomedullin/ADM and proadrenomedullin N-20 terminal peptide/PAMP are peptide hormones that act as potent hypotensive and vasodilatator agents. Numerous actions have been reported most related to the physiologic control of fluid and electrolyte homeostasis. Its function is as follows. ADM function is mediated by the CALCRL-RAMP2 and CALCRL-RAMP3 receptor complexes with ADM showing the highest potency for the CALCRL-RAMP2 complex. In Bos taurus (Bovine), this protein is Pro-adrenomedullin (ADM).